Consider the following 294-residue polypeptide: Nucleotide-binding protein Adeh_0147 (294 aa).

17–24 (GVSGSGKS) is a binding site for ATP. Residue 68 to 71 (DARE) participates in GTP binding.

It belongs to the RapZ-like family.

Its function is as follows. Displays ATPase and GTPase activities. The sequence is that of Nucleotide-binding protein Adeh_0147 from Anaeromyxobacter dehalogenans (strain 2CP-C).